Consider the following 346-residue polypeptide: N-acetyl-gamma-glutamyl-phosphate reductase (346 aa).

Cys-149 is an active-site residue.

The protein belongs to the NAGSA dehydrogenase family. Type 1 subfamily.

It is found in the cytoplasm. The catalysed reaction is N-acetyl-L-glutamate 5-semialdehyde + phosphate + NADP(+) = N-acetyl-L-glutamyl 5-phosphate + NADPH + H(+). The protein operates within amino-acid biosynthesis; L-arginine biosynthesis; N(2)-acetyl-L-ornithine from L-glutamate: step 3/4. Its function is as follows. Catalyzes the NADPH-dependent reduction of N-acetyl-5-glutamyl phosphate to yield N-acetyl-L-glutamate 5-semialdehyde. The protein is N-acetyl-gamma-glutamyl-phosphate reductase of Geotalea daltonii (strain DSM 22248 / JCM 15807 / FRC-32) (Geobacter daltonii).